We begin with the raw amino-acid sequence, 386 residues long: Synaptotagmin-5 (386 aa).

Over residues 1–16 (MFPEPPTPGPPSPDTP) the composition is skewed to pro residues. Residues 1–23 (MFPEPPTPGPPSPDTPPDSSRIS) are disordered. The Vesicular portion of the chain corresponds to 1-24 (MFPEPPTPGPPSPDTPPDSSRISH). The helical transmembrane segment at 25-45 (GPVPPWALATIVLVSGLLIFS) threads the bilayer. Residues 46–386 (CCFCLYRKSC…PDRVRLLPAP (341 aa)) are Cytoplasmic-facing. 2 consecutive C2 domains span residues 108–227 (ELGR…QAWR) and 239–372 (KLGD…AQWH). Residues Leu-138, Asp-139, Asp-145, Asp-197, Phe-198, Asp-199, Ser-202, Asp-205, Asp-270, Asp-276, Asp-330, and Asp-332 each contribute to the Ca(2+) site.

It belongs to the synaptotagmin family. As to quaternary structure, homodimer. Interacts with both alpha- and beta-tubulin. Ca(2+) is required as a cofactor.

It is found in the cytoplasmic vesicle. It localises to the secretory vesicle. Its subcellular location is the synaptic vesicle membrane. The protein resides in the recycling endosome membrane. Its function is as follows. May be involved in Ca(2+)-dependent exocytosis of secretory vesicles through Ca(2+) and phospholipid binding to the C2 domain or may serve as Ca(2+) sensors in the process of vesicular trafficking and exocytosis. Regulates the Ca(2+)-dependent secretion of norepinephrine in PC12 cells. Required for export from the endocytic recycling compartment to the cell surface. The protein is Synaptotagmin-5 (SYT5) of Homo sapiens (Human).